The following is a 102-amino-acid chain: MILSLSHFLIVAAMLFTIGVAGIILNRKNIIVVLMSVELILLSVNINLVSFSSFFGDLTGQVFSLFVLTVAAAEAAIGLAILVAYYRNRGSIAVEDINMMKG.

3 helical membrane-spanning segments follow: residues 5–25 (LSHF…GIIL), 30–50 (IIVV…NLVS), and 62–82 (VFSL…LAIL).

The protein belongs to the complex I subunit 4L family. NDH-1 is composed of 14 different subunits. Subunits NuoA, H, J, K, L, M, N constitute the membrane sector of the complex.

Its subcellular location is the cell inner membrane. It carries out the reaction a quinone + NADH + 5 H(+)(in) = a quinol + NAD(+) + 4 H(+)(out). Functionally, NDH-1 shuttles electrons from NADH, via FMN and iron-sulfur (Fe-S) centers, to quinones in the respiratory chain. The immediate electron acceptor for the enzyme in this species is believed to be ubiquinone. Couples the redox reaction to proton translocation (for every two electrons transferred, four hydrogen ions are translocated across the cytoplasmic membrane), and thus conserves the redox energy in a proton gradient. This Methylocella silvestris (strain DSM 15510 / CIP 108128 / LMG 27833 / NCIMB 13906 / BL2) protein is NADH-quinone oxidoreductase subunit K.